We begin with the raw amino-acid sequence, 164 residues long: MERFLENAMYASRWLLAPIYIGLSVALLALTLKFFQEVYHLLPHVLEMAEAELILVLLSMIDMALVGGLLVMVMISGYENFVSQLDIDEGKEKLDWLGKMDSGSLKLKVAASIVAISSIHLLRVFMDAQKIPNDKLLWYVLIHMTFVVSAFVMSYLEKMAKHAH.

Helical transmembrane passes span 15–35 (LLAP…LKFF), 53–73 (LILV…LVMV), 103–125 (GSLK…LRVF), and 136–156 (LLWY…MSYL).

This sequence belongs to the UPF0114 family.

The protein resides in the cell membrane. This Azotobacter vinelandii (strain DJ / ATCC BAA-1303) protein is UPF0114 protein Avin_40830.